We begin with the raw amino-acid sequence, 316 residues long: 4-hydroxy-3-methylbut-2-enyl diphosphate reductase (316 aa).

A [4Fe-4S] cluster-binding site is contributed by Cys-12. (2E)-4-hydroxy-3-methylbut-2-enyl diphosphate-binding residues include His-43 and His-81. The dimethylallyl diphosphate site is built by His-43 and His-81. Isopentenyl diphosphate contacts are provided by His-43 and His-81. Cys-103 contributes to the [4Fe-4S] cluster binding site. Position 131 (His-131) interacts with (2E)-4-hydroxy-3-methylbut-2-enyl diphosphate. A dimethylallyl diphosphate-binding site is contributed by His-131. His-131 is an isopentenyl diphosphate binding site. Residue Glu-133 is the Proton donor of the active site. Position 170 (Thr-170) interacts with (2E)-4-hydroxy-3-methylbut-2-enyl diphosphate. [4Fe-4S] cluster is bound at residue Cys-198. Residues Ser-226, Asn-228, and Ser-271 each coordinate (2E)-4-hydroxy-3-methylbut-2-enyl diphosphate. Residues Ser-226, Asn-228, and Ser-271 each contribute to the dimethylallyl diphosphate site. Ser-226, Asn-228, and Ser-271 together coordinate isopentenyl diphosphate.

The protein belongs to the IspH family. It depends on [4Fe-4S] cluster as a cofactor.

It carries out the reaction isopentenyl diphosphate + 2 oxidized [2Fe-2S]-[ferredoxin] + H2O = (2E)-4-hydroxy-3-methylbut-2-enyl diphosphate + 2 reduced [2Fe-2S]-[ferredoxin] + 2 H(+). The catalysed reaction is dimethylallyl diphosphate + 2 oxidized [2Fe-2S]-[ferredoxin] + H2O = (2E)-4-hydroxy-3-methylbut-2-enyl diphosphate + 2 reduced [2Fe-2S]-[ferredoxin] + 2 H(+). Its pathway is isoprenoid biosynthesis; dimethylallyl diphosphate biosynthesis; dimethylallyl diphosphate from (2E)-4-hydroxy-3-methylbutenyl diphosphate: step 1/1. The protein operates within isoprenoid biosynthesis; isopentenyl diphosphate biosynthesis via DXP pathway; isopentenyl diphosphate from 1-deoxy-D-xylulose 5-phosphate: step 6/6. In terms of biological role, catalyzes the conversion of 1-hydroxy-2-methyl-2-(E)-butenyl 4-diphosphate (HMBPP) into a mixture of isopentenyl diphosphate (IPP) and dimethylallyl diphosphate (DMAPP). Acts in the terminal step of the DOXP/MEP pathway for isoprenoid precursor biosynthesis. The protein is 4-hydroxy-3-methylbut-2-enyl diphosphate reductase of Bacillus cereus (strain B4264).